Consider the following 170-residue polypeptide: Brassinosteroid-responsive RING protein 1 (170 aa).

A helical transmembrane segment spans residues Leu15–Leu37. The segment at Cys94–Arg137 adopts an RING-type; atypical zinc-finger fold.

This sequence belongs to the RING-type zinc finger family. As to expression, highly expressed in stems, rosette leaves and siliques, and moderately expressed in roots, cauline leaves and flower. Detected at low levels in seeds.

It is found in the membrane. May be involved in the brassinosteroids (BRs) signaling pathway and regulate the growth and development of rosette leaves. Seems to prevent over development of leaves and inflorescence stems. The protein is Brassinosteroid-responsive RING protein 1 of Arabidopsis thaliana (Mouse-ear cress).